The chain runs to 803 residues: Phenylalanine--tRNA ligase beta subunit (803 aa).

Residues 40 to 153 (ASLDRRIVVG…SSWEIGKPFA (114 aa)) enclose the tRNA-binding domain. The region spanning 400–476 (ADLQLLALRP…RLYGYNAIES (77 aa)) is the B5 domain. Mg(2+) contacts are provided by D454, D460, E463, and E464. One can recognise an FDX-ACB domain in the interval 709 to 801 (SRFPVVERDI…AESKLGAVIR (93 aa)).

Belongs to the phenylalanyl-tRNA synthetase beta subunit family. Type 1 subfamily. In terms of assembly, tetramer of two alpha and two beta subunits. It depends on Mg(2+) as a cofactor.

Its subcellular location is the cytoplasm. The enzyme catalyses tRNA(Phe) + L-phenylalanine + ATP = L-phenylalanyl-tRNA(Phe) + AMP + diphosphate + H(+). This chain is Phenylalanine--tRNA ligase beta subunit, found in Chlorobium chlorochromatii (strain CaD3).